Consider the following 423-residue polypeptide: Large ribosomal subunit protein mL37 (423 aa).

The transit peptide at 1–29 (MALASGPAMRALAGSARLGLGGYGAPKRG) directs the protein to the mitochondrion.

It belongs to the mitochondrion-specific ribosomal protein mL37 family. Component of the mitochondrial ribosome large subunit (39S) which comprises a 16S rRNA and about 50 distinct proteins.

The protein localises to the mitochondrion. This is Large ribosomal subunit protein mL37 (Mrpl37) from Rattus norvegicus (Rat).